A 462-amino-acid chain; its full sequence is A-type ATP synthase subunit B (462 aa).

Belongs to the ATPase alpha/beta chains family. Has multiple subunits with at least A(3), B(3), C, D, E, F, H, I and proteolipid K(x).

It localises to the cell membrane. Its function is as follows. Component of the A-type ATP synthase that produces ATP from ADP in the presence of a proton gradient across the membrane. The B chain is a regulatory subunit. This chain is A-type ATP synthase subunit B, found in Methanococcus vannielii (strain ATCC 35089 / DSM 1224 / JCM 13029 / OCM 148 / SB).